A 215-amino-acid polypeptide reads, in one-letter code: Probable phosphoglycerate mutase GpmB (215 aa).

Residues 8-15, 21-22, Arg-58, 82-85, and 151-152 each bind substrate; these read RHGETLWN, QG, ELNM, and GM. Catalysis depends on His-9, which acts as the Tele-phosphohistidine intermediate. Glu-82 (proton donor/acceptor) is an active-site residue.

This sequence belongs to the phosphoglycerate mutase family. GpmB subfamily.

It carries out the reaction (2R)-2-phosphoglycerate = (2R)-3-phosphoglycerate. Its pathway is carbohydrate degradation; glycolysis; pyruvate from D-glyceraldehyde 3-phosphate: step 3/5. This is Probable phosphoglycerate mutase GpmB from Yersinia pseudotuberculosis serotype O:1b (strain IP 31758).